The primary structure comprises 282 residues: NADPH-dependent 7-cyano-7-deazaguanine reductase (282 aa).

Ile88–Ser90 contacts substrate. Residue Ser90 to Lys91 participates in NADPH binding. Cys190 acts as the Thioimide intermediate in catalysis. Asp197 (proton donor) is an active-site residue. His229–Glu230 provides a ligand contact to substrate. Arg258–Gly259 serves as a coordination point for NADPH.

Belongs to the GTP cyclohydrolase I family. QueF type 2 subfamily. Homodimer.

The protein resides in the cytoplasm. It carries out the reaction 7-aminomethyl-7-carbaguanine + 2 NADP(+) = 7-cyano-7-deazaguanine + 2 NADPH + 3 H(+). The protein operates within tRNA modification; tRNA-queuosine biosynthesis. Catalyzes the NADPH-dependent reduction of 7-cyano-7-deazaguanine (preQ0) to 7-aminomethyl-7-deazaguanine (preQ1). The sequence is that of NADPH-dependent 7-cyano-7-deazaguanine reductase from Salmonella heidelberg (strain SL476).